The primary structure comprises 219 residues: tRNA (guanine-N(7)-)-methyltransferase (219 aa).

Glutamate 51, glutamate 76, aspartate 103, and aspartate 125 together coordinate S-adenosyl-L-methionine. Residue aspartate 125 is part of the active site. Residues lysine 129, aspartate 161, and 199–202 each bind substrate; that span reads TRYE.

This sequence belongs to the class I-like SAM-binding methyltransferase superfamily. TrmB family.

It catalyses the reaction guanosine(46) in tRNA + S-adenosyl-L-methionine = N(7)-methylguanosine(46) in tRNA + S-adenosyl-L-homocysteine. It participates in tRNA modification; N(7)-methylguanine-tRNA biosynthesis. Functionally, catalyzes the formation of N(7)-methylguanine at position 46 (m7G46) in tRNA. In Hyphomonas neptunium (strain ATCC 15444), this protein is tRNA (guanine-N(7)-)-methyltransferase.